A 339-amino-acid chain; its full sequence is uncharacterized protein (339 aa).

A signal peptide spans 1–29; that stretch reads MIKQVCKNITICSLALSTALTVFPASSYA.

Belongs to the aerolysin family.

This is an uncharacterized protein from Staphylococcus aureus (strain MRSA252).